Consider the following 487-residue polypeptide: DNA polymerase delta small subunit (487 aa).

At Met1 the chain carries N-acetylmethionine. Position 20 is a phosphoserine (Ser20).

Belongs to the DNA polymerase delta/II small subunit family. As to quaternary structure, DNA polymerase delta is a heterotrimer of POL3, POL32 and HYS2.

It localises to the nucleus. It catalyses the reaction DNA(n) + a 2'-deoxyribonucleoside 5'-triphosphate = DNA(n+1) + diphosphate. DNA polymerase delta (DNA polymerase III) participates in chromosomal DNA replication. It is required during synthesis of the leading and lagging DNA strands at the replication fork and binds at/or near replication origins and moves along DNA with the replication fork. It has 3'-5' proofreading exonuclease activity that correct errors arising during DNA replication. It is also involved in DNA synthesis during DNA repair. The polypeptide is DNA polymerase delta small subunit (POL31) (Saccharomyces cerevisiae (strain ATCC 204508 / S288c) (Baker's yeast)).